A 546-amino-acid chain; its full sequence is Probable zinc metalloprotease EGY2, chloroplastic (546 aa).

The N-terminal 64 residues, 1–64 (MQLPAMSCSP…QIRNRRFVCQ (64 aa)), are a transit peptide targeting the chloroplast. The disordered stretch occupies residues 67–143 (TETEPDGDGN…DATPASDAQE (77 aa)). A compositionally biased stretch (acidic residues) spans 69–86 (TEPDGDGNGDEEKEELGD). Polar residues-rich tracts occupy residues 89–110 (SSPSVDSVTQENGSAESETNAD) and 118–130 (NTEPLSSSDTVQN). The next 7 helical transmembrane spans lie at 257 to 277 (AVPEWFAAASFGVVTIFTLLL), 301 to 321 (VYGALVTAAIIGVHEIAHILA), 326 to 346 (GIKLAVPYFVPSWQIGSFGAI), 364 to 384 (AAGPLAGFSLGFVLLLLGFIL), 427 to 447 (PLVLWAWAGLLINAINSIPAG), 474 to 494 (LLGISALFNDVAFYWVVLIFF), and 514 to 534 (YISIGVAILLFGLLVCLPYPF).

It belongs to the peptidase M50B family.

It is found in the plastid. The protein localises to the chloroplast membrane. Functionally, probable membrane-associated metalloprotease that may be involved in chloroplast development. This Oryza sativa subsp. japonica (Rice) protein is Probable zinc metalloprotease EGY2, chloroplastic (EGY2).